A 365-amino-acid polypeptide reads, in one-letter code: Cobalt-precorrin-5B C(1)-methyltransferase (365 aa).

The protein belongs to the CbiD family.

It carries out the reaction Co-precorrin-5B + S-adenosyl-L-methionine = Co-precorrin-6A + S-adenosyl-L-homocysteine. Its pathway is cofactor biosynthesis; adenosylcobalamin biosynthesis; cob(II)yrinate a,c-diamide from sirohydrochlorin (anaerobic route): step 6/10. In terms of biological role, catalyzes the methylation of C-1 in cobalt-precorrin-5B to form cobalt-precorrin-6A. This is Cobalt-precorrin-5B C(1)-methyltransferase from Clostridium perfringens (strain SM101 / Type A).